Here is a 185-residue protein sequence, read N- to C-terminus: Large ribosomal subunit protein bL25 (185 aa).

It belongs to the bacterial ribosomal protein bL25 family. CTC subfamily. Part of the 50S ribosomal subunit; part of the 5S rRNA/L5/L18/L25 subcomplex. Contacts the 5S rRNA. Binds to the 5S rRNA independently of L5 and L18.

In terms of biological role, this is one of the proteins that binds to the 5S RNA in the ribosome where it forms part of the central protuberance. This Chlamydia pneumoniae (Chlamydophila pneumoniae) protein is Large ribosomal subunit protein bL25.